Reading from the N-terminus, the 421-residue chain is Cyclin-A1 (421 aa).

The interval 1–20 (MRRHSSKSGVALPPVGQGPD) is disordered.

It belongs to the cyclin family. Cyclin AB subfamily. Interacts with the CDK2 and the CDC2 protein kinases to form a serine/threonine kinase holoenzyme complex. The cyclin subunit imparts substrate specificity to the complex. Does not bind CDK4 and CDK5 (in vitro). The cyclin A1-CDK2 complex interacts with transcription factor E2F-1 and RB proteins. Found in a complex with CDK2, CABLES1 and CCNE1. Interacts with INCA1 and KLHDC9. Post-translationally, polyubiquitinated via 'Lys-11'-linked ubiquitin by the anaphase-promoting complex (APC/C), leading to its degradation by the proteasome. Deubiquitinated and stabilized by USP37 enables entry into S phase. Ubiquitinated during the G1 phase by the SCF(FBXO31) complex, leading to its proteasomal degradation.

It is found in the nucleus. May be involved in the control of the cell cycle at the G1/S (start) and G2/M (mitosis) transitions. May primarily function in the control of the germline meiotic cell cycle and additionally in the control of mitotic cell cycle in some somatic cells. This Rattus norvegicus (Rat) protein is Cyclin-A1 (Ccna1).